Here is a 233-residue protein sequence, read N- to C-terminus: Large ribosomal subunit protein uL1 (233 aa).

Belongs to the universal ribosomal protein uL1 family. Part of the 50S ribosomal subunit.

Its function is as follows. Binds directly to 23S rRNA. The L1 stalk is quite mobile in the ribosome, and is involved in E site tRNA release. Functionally, protein L1 is also a translational repressor protein, it controls the translation of the L11 operon by binding to its mRNA. In Rhizobium johnstonii (strain DSM 114642 / LMG 32736 / 3841) (Rhizobium leguminosarum bv. viciae), this protein is Large ribosomal subunit protein uL1.